The following is a 339-amino-acid chain: Uroporphyrinogen decarboxylase (339 aa).

Substrate-binding positions include 23 to 27, Asp72, Tyr147, Thr202, and His315; that span reads RQAGR.

It belongs to the uroporphyrinogen decarboxylase family. In terms of assembly, homodimer.

The protein resides in the cytoplasm. The catalysed reaction is uroporphyrinogen III + 4 H(+) = coproporphyrinogen III + 4 CO2. The protein operates within porphyrin-containing compound metabolism; protoporphyrin-IX biosynthesis; coproporphyrinogen-III from 5-aminolevulinate: step 4/4. Its function is as follows. Catalyzes the decarboxylation of four acetate groups of uroporphyrinogen-III to yield coproporphyrinogen-III. This is Uroporphyrinogen decarboxylase from Geotalea daltonii (strain DSM 22248 / JCM 15807 / FRC-32) (Geobacter daltonii).